A 417-amino-acid polypeptide reads, in one-letter code: D-amino acid dehydrogenase (417 aa).

3 to 17 (IVVLGGGVVGVTSAW) serves as a coordination point for FAD.

This sequence belongs to the DadA oxidoreductase family. Requires FAD as cofactor.

The enzyme catalyses a D-alpha-amino acid + A + H2O = a 2-oxocarboxylate + AH2 + NH4(+). It functions in the pathway amino-acid degradation; D-alanine degradation; NH(3) and pyruvate from D-alanine: step 1/1. Oxidative deamination of D-amino acids. The polypeptide is D-amino acid dehydrogenase (Aeromonas hydrophila subsp. hydrophila (strain ATCC 7966 / DSM 30187 / BCRC 13018 / CCUG 14551 / JCM 1027 / KCTC 2358 / NCIMB 9240 / NCTC 8049)).